The following is a 523-amino-acid chain: UDP-glucuronosyltransferase 3A1 (523 aa).

The first 22 residues, 1-22, serve as a signal peptide directing secretion; the sequence is MAGQQALLLFGFILPGLLFSEA. Over 23 to 483 the chain is Extracellular; the sequence is AKILTVSLVG…HAFQQPWYEQ (461 aa). Asn-52 is a glycosylation site (N-linked (GlcNAc...) asparagine). A helical membrane pass occupies residues 484–504; that stretch reads YLLDVFLFLLVVTLGTMWLCG. At 505 to 523 the chain is on the cytoplasmic side; it reads KLLGLVARWLCGARKLKKA.

It belongs to the UDP-glycosyltransferase family.

The protein localises to the membrane. The enzyme catalyses glucuronate acceptor + UDP-alpha-D-glucuronate = acceptor beta-D-glucuronoside + UDP + H(+). Its function is as follows. UDP-glucuronosyltransferases catalyze phase II biotransformation reactions in which lipophilic substrates are conjugated with glucuronic acid to increase water solubility and enhance excretion. They are of major importance in the conjugation and subsequent elimination of potentially toxic xenobiotics and endogenous compounds. The polypeptide is UDP-glucuronosyltransferase 3A1 (UGT3A1) (Bos taurus (Bovine)).